A 214-amino-acid chain; its full sequence is Probable transaldolase (214 aa).

K83 (schiff-base intermediate with substrate) is an active-site residue.

This sequence belongs to the transaldolase family. Type 3B subfamily.

Its subcellular location is the cytoplasm. The enzyme catalyses D-sedoheptulose 7-phosphate + D-glyceraldehyde 3-phosphate = D-erythrose 4-phosphate + beta-D-fructose 6-phosphate. Its pathway is carbohydrate degradation; pentose phosphate pathway; D-glyceraldehyde 3-phosphate and beta-D-fructose 6-phosphate from D-ribose 5-phosphate and D-xylulose 5-phosphate (non-oxidative stage): step 2/3. In terms of biological role, transaldolase is important for the balance of metabolites in the pentose-phosphate pathway. This chain is Probable transaldolase, found in Desulfatibacillum aliphaticivorans.